A 1130-amino-acid chain; its full sequence is Putative beta-hexosaminidase (1130 aa).

The N-terminal stretch at 1-23 (MKWVKSGVGILGILLIICHAVTS) is a signal peptide. 2 stretches are compositionally biased toward low complexity: residues 1001–1030 (PGQM…LPAQ) and 1037–1072 (LTGQ…QRTG). Disordered stretches follow at residues 1001 to 1075 (PGQM…GVVP) and 1102 to 1130 (QMRG…QQAG).

The protein belongs to the glycosyl hydrolase 20 family. In terms of tissue distribution, prismatic layer of shell (at protein level). Expressed primarily in the mantle with highest level in the mantle edge and lower level in the mantle pallium.

The protein resides in the secreted. The catalysed reaction is Hydrolysis of terminal non-reducing N-acetyl-D-hexosamine residues in N-acetyl-beta-D-hexosaminides.. It functions in the pathway glycan degradation; chitin degradation. This chain is Putative beta-hexosaminidase, found in Pinctada maxima (Silver-lipped pearl oyster).